The following is a 488-amino-acid chain: Cysteine--tRNA ligase (488 aa).

Cys40 lines the Zn(2+) pocket. The 'HIGH' region signature appears at 42–52 (MTVYDYCHIGH). Positions 221, 246, and 250 each coordinate Zn(2+). The short motif at 278-282 (KMSKS) is the 'KMSKS' region element. Position 281 (Lys281) interacts with ATP.

It belongs to the class-I aminoacyl-tRNA synthetase family. Monomer. Requires Zn(2+) as cofactor.

The protein resides in the cytoplasm. It carries out the reaction tRNA(Cys) + L-cysteine + ATP = L-cysteinyl-tRNA(Cys) + AMP + diphosphate. The sequence is that of Cysteine--tRNA ligase from Psychrobacter cryohalolentis (strain ATCC BAA-1226 / DSM 17306 / VKM B-2378 / K5).